We begin with the raw amino-acid sequence, 163 residues long: Phosphopantetheine adenylyltransferase (163 aa).

Ser-11 lines the substrate pocket. ATP-binding positions include 11 to 12 (SF) and His-19. Substrate contacts are provided by Lys-43, Ala-76, and Arg-90. ATP contacts are provided by residues 91–93 (GLR), Glu-101, and 126–132 (WQALSSS).

It belongs to the bacterial CoaD family. In terms of assembly, homohexamer. Mg(2+) serves as cofactor.

It is found in the cytoplasm. It catalyses the reaction (R)-4'-phosphopantetheine + ATP + H(+) = 3'-dephospho-CoA + diphosphate. It functions in the pathway cofactor biosynthesis; coenzyme A biosynthesis; CoA from (R)-pantothenate: step 4/5. In terms of biological role, reversibly transfers an adenylyl group from ATP to 4'-phosphopantetheine, yielding dephospho-CoA (dPCoA) and pyrophosphate. This chain is Phosphopantetheine adenylyltransferase, found in Streptococcus pyogenes serotype M2 (strain MGAS10270).